A 257-amino-acid chain; its full sequence is Small ribosomal subunit protein eS1 (257 aa).

The tract at residues 236 to 257 (TSAEGEKIERPDDYEPPVQESV) is disordered. Basic and acidic residues predominate over residues 239-248 (EGEKIERPDD).

Belongs to the eukaryotic ribosomal protein eS1 family. As to quaternary structure, component of the small ribosomal subunit. Mature ribosomes consist of a small (40S) and a large (60S) subunit. The 40S subunit contains about 33 different proteins and 1 molecule of RNA (18S). The 60S subunit contains about 49 different proteins and 3 molecules of RNA (28S, 5.8S and 5S).

The protein resides in the cytoplasm. The chain is Small ribosomal subunit protein eS1 from Brugia malayi (Filarial nematode worm).